The primary structure comprises 432 residues: Probable imidazolonepropionase (432 aa).

Residues Tyr159 and His192 each coordinate 4-imidazolone-5-propanoate. Tyr159 serves as a coordination point for N-formimidoyl-L-glutamate. His260 provides a ligand contact to Fe(3+). His260 lines the Zn(2+) pocket. Glu263 contributes to the 4-imidazolone-5-propanoate binding site. Residue Asp334 coordinates Fe(3+). Residue Asp334 coordinates Zn(2+). Asn336 is an N-formimidoyl-L-glutamate binding site.

This sequence belongs to the metallo-dependent hydrolases superfamily. HutI family. Zn(2+) serves as cofactor. Fe(3+) is required as a cofactor.

The enzyme catalyses 4-imidazolone-5-propanoate + H2O = N-formimidoyl-L-glutamate. It participates in amino-acid degradation; L-histidine degradation into L-glutamate; N-formimidoyl-L-glutamate from L-histidine: step 3/3. The polypeptide is Probable imidazolonepropionase (amdhd1) (Xenopus tropicalis (Western clawed frog)).